Consider the following 564-residue polypeptide: Ribulokinase (564 aa).

The protein belongs to the ribulokinase family.

It carries out the reaction D-ribulose + ATP = D-ribulose 5-phosphate + ADP + H(+). It catalyses the reaction L-ribulose + ATP = L-ribulose 5-phosphate + ADP + H(+). The protein operates within carbohydrate degradation; L-arabinose degradation via L-ribulose; D-xylulose 5-phosphate from L-arabinose (bacterial route): step 2/3. The protein is Ribulokinase of Anoxybacillus flavithermus (strain DSM 21510 / WK1).